The primary structure comprises 243 residues: UPF0758 protein alr2351 (243 aa).

Positions 113–235 constitute an MPN domain; it reads PIDSPVAAVA…HQSLREITTL (123 aa). Residues histidine 184, histidine 186, and aspartate 197 each coordinate Zn(2+). The JAMM motif signature appears at 184-197; it reads HNHPSGNVEPSPED.

Belongs to the UPF0758 family.

The polypeptide is UPF0758 protein alr2351 (Nostoc sp. (strain PCC 7120 / SAG 25.82 / UTEX 2576)).